A 297-amino-acid polypeptide reads, in one-letter code: CASP-like protein 2U8 (297 aa).

Topologically, residues 1 to 10 (MLELYEKRRA) are cytoplasmic. Residues 11–31 (LLLLRLAAMFLSLAALLITVL) form a helical membrane-spanning segment. At 32-64 (NREDGFFSINVFGSPQPILAKATADFTLVKGLK) the chain is on the extracellular side. The chain crosses the membrane as a helical span at residues 65 to 85 (FFAGAMGIVAGYSFLQLAIAM). Residues 86–101 (ASIFSGAPSILGGKRM) are Cytoplasmic-facing. A helical membrane pass occupies residues 102-122 (AWLCFVGDMTASHLCAAAAAV). Topologically, residues 123–148 (SAQLAYLGKRGAPMWSAVCTYFSHYC) are extracellular. A helical membrane pass occupies residues 149 to 169 (LVFGLAVILAFLATLAALLVA). Topologically, residues 170 to 297 (SISSYHLAYD…RVLEMETPCK (128 aa)) are cytoplasmic.

This sequence belongs to the Casparian strip membrane proteins (CASP) family. As to quaternary structure, homodimer and heterodimers.

Its subcellular location is the cell membrane. In Selaginella moellendorffii (Spikemoss), this protein is CASP-like protein 2U8.